A 144-amino-acid chain; its full sequence is Transcriptional regulator SlyA (144 aa).

An HTH marR-type domain is found at 2–135 (ESPLGSDLAR…LIKLIAKLEH (134 aa)). A DNA-binding region (H-T-H motif) is located at residues 49–72 (QIQLAKAIGIEQPSLVRTLDQLED).

This sequence belongs to the SlyA family. As to quaternary structure, homodimer.

It localises to the cytoplasm. Transcription regulator that can specifically activate or repress expression of target genes. Required for virulence and survival in the macrophage environment. Probably activates the transcription of ssrB. Independently of ssrB activation, capable of stimulating the expression of virulence genes found on pathogenicity island 2 (SPI2). Probably activates expression of ispA, xseB genes, and of omp operon. This chain is Transcriptional regulator SlyA, found in Salmonella typhimurium (strain LT2 / SGSC1412 / ATCC 700720).